A 754-amino-acid chain; its full sequence is Probable beta-glucosidase D (754 aa).

Residues 1–20 (MKVLSFIVAAALLGLTGASS) form the signal peptide. 3 N-linked (GlcNAc...) asparagine glycosylation sites follow: asparagine 66, asparagine 69, and asparagine 186. Positions 186–206 (NRTGGGGGGGGDSGSAPYSSN) are disordered. The segment covering 188–198 (TGGGGGGGGDS) has biased composition (gly residues). N-linked (GlcNAc...) asparagine glycosylation occurs at asparagine 239. Residue aspartate 267 is part of the active site. Asparagine 301, asparagine 345, asparagine 443, asparagine 512, asparagine 534, asparagine 573, asparagine 588, asparagine 655, and asparagine 745 each carry an N-linked (GlcNAc...) asparagine glycan.

It belongs to the glycosyl hydrolase 3 family.

It is found in the secreted. It carries out the reaction Hydrolysis of terminal, non-reducing beta-D-glucosyl residues with release of beta-D-glucose.. Its pathway is glycan metabolism; cellulose degradation. Its function is as follows. Beta-glucosidases are one of a number of cellulolytic enzymes involved in the degradation of cellulosic biomass. Catalyzes the last step releasing glucose from the inhibitory cellobiose. This chain is Probable beta-glucosidase D (bglD), found in Aspergillus niger (strain ATCC MYA-4892 / CBS 513.88 / FGSC A1513).